The following is a 458-amino-acid chain: MGDAGGHSHHHQHGFQPQLLSFGGVGHHHHLHQFTAQPQPPAASHTRGRGGGGEIVPATTTPRSRGGGGGGGGEIVAVQGGHIVRSTGRKDRHSKVCTARGPRDRRVRLSAHTAIQFYDVQDRLGYDRPSKAVDWLIKNAKDAIDKLDVLPAWQPTAGGAGAGNAAAPPSSSTHPDSAENSDDQAQAITVAHTAFDFAGGGSGGTSFLPPSLDSDAIADTIKSFFPMGGTAGGEASSSTTAAQSSAMGFQSYTPDLLSRTGSQSQELRLSLQSLPDPMFHHQQHRHGGGGGGGNGTTQQALFSGAANYSFGGGAMWATEQQAQNQRMLPWNVPDPGGGGGAAYLFNVSQQAAHMQAAAAALGGHQSQFFFQRGPLQSSNQPSERGWPETVEADNQMSHHQGGLSPSVSAAIGFAAPGIGFSGFRLPARIQGDEEHNGGGGGNGDKPPPPSSVSSASHH.

4 disordered regions span residues 1–103 (MGDA…RGPR), 159–182 (GAGA…ENSD), 278–299 (MFHH…TTQQ), and 424–458 (RLPA…ASHH). A compositionally biased stretch (gly residues) spans 65–74 (RGGGGGGGGE). Residues 89–147 (RKDRHSKVCTARGPRDRRVRLSAHTAIQFYDVQDRLGYDRPSKAVDWLIKNAKDAIDKL) form the TCP domain.

As to quaternary structure, forms homodimers and heterodimers.

It localises to the nucleus. Transcription activator. Binds the promoter core sequence 5'-GGNCC-3'. In Oryza sativa subsp. japonica (Rice), this protein is Transcription factor PCF5 (PCF5).